Consider the following 198-residue polypeptide: MASTASNTSKLEKPVSLIWGCELNEQNKTFVFKVSDEDKSEHQLALRTVCLGDKAKDEFHVVEIVPQVEGSDVQPVPIASLKPSILPMATMVGIELTPPVTFRLKAGSGPVYISGQHIALEEDYSWAEEEGEEEVEEEEEEEDPESPPKAVKRPAASKKGSQAKKKKMDKDEEESSEEDSPVKKGKGAGRGRKPAAKK.

Residues 35–38 (SDED) are acidic tract A1. Acidic residues predominate over residues 125-145 (SWAEEEGEEEVEEEEEEEDPE). The tract at residues 125-198 (SWAEEEGEEE…GRGRKPAAKK (74 aa)) is disordered. The acidic tract A2 stretch occupies residues 128 to 145 (EEEGEEEVEEEEEEEDPE). Basic residues predominate over residues 150 to 167 (AVKRPAASKKGSQAKKKK). A Bipartite nuclear localization signal motif is present at residues 152–167 (KRPAASKKGSQAKKKK). Positions 172–174 (EEE) are acidic tract A3. Residues 183–198 (KKGKGAGRGRKPAAKK) are compositionally biased toward basic residues.

It belongs to the nucleoplasmin family. In terms of assembly, homopentamer. In terms of tissue distribution, expressed in oocytes.

It is found in the nucleus. In terms of biological role, acts as a chaperone for histones, such as histone H2A-H2B, and thus regulates the assembly of nucleosome cores. Involved in chromatin remodeling, especially during fertilization and early embryonic development. May be involved in sperm chromatin decondensation during fertilization. This chain is Nucleoplasmin, found in Rhinella marina (Cane toad).